A 98-amino-acid polypeptide reads, in one-letter code: Large ribosomal subunit protein uL23 (98 aa).

Belongs to the universal ribosomal protein uL23 family. In terms of assembly, part of the 50S ribosomal subunit. Contacts protein L29, and trigger factor when it is bound to the ribosome.

Its function is as follows. One of the early assembly proteins it binds 23S rRNA. One of the proteins that surrounds the polypeptide exit tunnel on the outside of the ribosome. Forms the main docking site for trigger factor binding to the ribosome. The polypeptide is Large ribosomal subunit protein uL23 (Nitrobacter hamburgensis (strain DSM 10229 / NCIMB 13809 / X14)).